The following is a 312-amino-acid chain: NAD-dependent protein deacylase Sirt4 (312 aa).

A mitochondrion-targeting transit peptide spans Met1–Ser16. The region spanning Lys28–Ser312 is the Deacetylase sirtuin-type domain. Residues Gly53–Tyr73 and Gln134–Asp137 each bind NAD(+). His152 (proton acceptor) is an active-site residue. Residues Cys160, Cys163, Cys211, and Cys214 each contribute to the Zn(2+) site. Residues Gly251–Ser253, Asn277–Gly279, and Cys295 contribute to the NAD(+) site.

It belongs to the sirtuin family. Class II subfamily. It depends on Zn(2+) as a cofactor.

It localises to the mitochondrion matrix. It carries out the reaction N(6)-acetyl-L-lysyl-[protein] + NAD(+) + H2O = 2''-O-acetyl-ADP-D-ribose + nicotinamide + L-lysyl-[protein]. Its function is as follows. NAD-dependent protein deacylase. Catalyzes the NAD-dependent hydrolysis of acyl groups from lysine residues. This is NAD-dependent protein deacylase Sirt4 (Sirt4) from Drosophila melanogaster (Fruit fly).